Here is a 793-residue protein sequence, read N- to C-terminus: Spindle and centriole-associated protein 1 (793 aa).

A disordered region spans residues 1–29 (MSYLRASRTSSNLSLAKKPSKTRKKLQAR). Basic residues predominate over residues 18–27 (KPSKTRKKLQ). A coiled-coil region spans residues 312 to 405 (SLGLLNSMIM…LTAEILSLKE (94 aa)). Residues 519–542 (KTVGNLSSHSAVPKRAANRLPSPP) are disordered. The stretch at 622-712 (LQNEDLVSQM…LLKLIEQQKQ (91 aa)) forms a coiled coil. Over residues 718-739 (PTLSPITPQGRRTGSSLDTTPL) the composition is skewed to polar residues. The disordered stretch occupies residues 718-783 (PTLSPITPQG…RSQAANDRGE (66 aa)). Low complexity predominate over residues 740-753 (SSCSTSGRRSSGAS). Residues 754–778 (NKSESISTSVGSLRSASTGRRSQAA) are compositionally biased toward polar residues.

It localises to the cytoplasm. Its subcellular location is the cytoskeleton. The protein localises to the microtubule organizing center. It is found in the centrosome. The protein resides in the centriole. It localises to the spindle. Functionally, regulator required for centriole duplication. The sequence is that of Spindle and centriole-associated protein 1 (spice1) from Xenopus laevis (African clawed frog).